The primary structure comprises 155 residues: Probable methanogenesis regulatory protein FilR2 (155 aa).

Residues 18 to 142 (IILLVEDNNA…DLKRTVEEIK (125 aa)) enclose the Response regulatory domain. At aspartate 75 the chain carries 4-aspartylphosphate.

Phosphorylated by FilI.

Its function is as follows. Member of the two-component regulatory system FilI/FilRs, which is involved in the regulation of methanogenesis. The chain is Probable methanogenesis regulatory protein FilR2 from Methanothrix harundinacea (strain 6Ac) (Methanosaeta harundinacea).